Here is a 387-residue protein sequence, read N- to C-terminus: Palmitoyltransferase ZDHHC16A (387 aa).

Helical transmembrane passes span 73 to 93 (WFGM…VFIA) and 106 to 126 (SPGW…MIVF). The DHHC domain occupies 150–200 (SVCKKCIIPKPARSHHCGICKTCILKMDHHCPWLNNCVGHFNHRYFFSFCL). The active-site S-palmitoyl cysteine intermediate is the cysteine 180. The next 3 helical transmembrane spans lie at 198–218 (FCLF…HLFI), 236–256 (GVPV…GVAG), and 281–301 (VIYM…LTLW).

The protein belongs to the DHHC palmitoyltransferase family. As to expression, expressed in the central nervous system (CNS). Expressed in the developing forebrain, and especially in the telencephalon.

The protein resides in the endoplasmic reticulum membrane. The enzyme catalyses L-cysteinyl-[protein] + hexadecanoyl-CoA = S-hexadecanoyl-L-cysteinyl-[protein] + CoA. In terms of biological role, palmitoyl acyltransferase that mediates palmitoylation of proteins and is required during embryonic heart development. Involved in the proliferation of neural stem cells by regulating the FGF/ERK pathway. Involved in the proliferation of neural stem cells by regulating the FGF/ERK pathway. This chain is Palmitoyltransferase ZDHHC16A, found in Danio rerio (Zebrafish).